Consider the following 21-residue polypeptide: Outer membrane protein A (21 aa).

The beta stranded transmembrane segment at 6–16 (TWYTGAKLGWS) threads the bilayer.

It belongs to the outer membrane OOP (TC 1.B.6) superfamily. OmpA family. In terms of assembly, monomer and homodimer.

The protein resides in the cell outer membrane. Functionally, with TolR probably plays a role in maintaining the position of the peptidoglycan cell wall in the periplasm. Acts as a porin with low permeability that allows slow penetration of small solutes; an internal gate slows down solute passage. The polypeptide is Outer membrane protein A (Actinobacillus lignieresii).